Reading from the N-terminus, the 1208-residue chain is DNA-directed RNA polymerase subunit beta (1208 aa).

The protein belongs to the RNA polymerase beta chain family. In terms of assembly, the RNAP catalytic core consists of 2 alpha, 1 beta, 1 beta' and 1 omega subunit. When a sigma factor is associated with the core the holoenzyme is formed, which can initiate transcription.

It carries out the reaction RNA(n) + a ribonucleoside 5'-triphosphate = RNA(n+1) + diphosphate. Functionally, DNA-dependent RNA polymerase catalyzes the transcription of DNA into RNA using the four ribonucleoside triphosphates as substrates. In Enterococcus faecium (Streptococcus faecium), this protein is DNA-directed RNA polymerase subunit beta.